Here is a 360-residue protein sequence, read N- to C-terminus: Magnesium transporter NIPA2 (360 aa).

At 1–9 the chain is on the extracellular side; it reads MSQGHGKYD. Residues 10–30 traverse the membrane as a helical segment; sequence FYIGLGLAMSSSIFIGGSFIL. The Cytoplasmic portion of the chain corresponds to 31–56; the sequence is KKKGLLRLARKGSTRAGQGGHAYLKE. Residues 57–77 form a helical membrane-spanning segment; it reads WLWWAGLLSMGAGEVANFAAY. Ala-78 is a topological domain (extracellular). Residues 79 to 99 form a helical membrane-spanning segment; sequence FAPATLVTPLGALSVLVSAIL. The Cytoplasmic portion of the chain corresponds to 100-107; that stretch reads SSYFLNER. The chain crosses the membrane as a helical span at residues 108–128; the sequence is LNLHGKIGCLLSILGSTVMVI. Residues 129 to 149 are Extracellular-facing; that stretch reads HAPKEEEIETLNEMSHKLGDP. The helical transmembrane segment at 150–170 threads the bilayer; it reads GFVVFATLVVIVSLILIFVVG. Over 171–175 the chain is Cytoplasmic; sequence PRHGQ. Residues 176–196 traverse the membrane as a helical segment; the sequence is TNILVYITICSVIGAVSVSCA. At 197 to 215 the chain is on the extracellular side; it reads KGLGIAIKELFAGKPVLQH. The helical transmembrane segment at 216–236 threads the bilayer; sequence PLTWILLLSLIVCVSTQINYL. Residues 237-246 are Cytoplasmic-facing; that stretch reads NRALDIFNTS. The chain crosses the membrane as a helical span at residues 247–267; sequence IVTPIYYVFFTTSVITCSAIL. At 268-278 the chain is on the extracellular side; sequence FKEWQDMPVDD. Residues 279–299 form a helical membrane-spanning segment; the sequence is VIGTLSGFFTIIVGIFLLHAF. Residues 300–360 lie on the Cytoplasmic side of the membrane; that stretch reads KDVSFSLSSL…SRRNGNLTAF (61 aa).

This sequence belongs to the NIPA family.

It localises to the cell membrane. The protein resides in the early endosome. The enzyme catalyses Mg(2+)(in) = Mg(2+)(out). In terms of biological role, acts as a selective Mg(2+) transporter. The sequence is that of Magnesium transporter NIPA2 (NIPA2) from Bos taurus (Bovine).